Here is a 697-residue protein sequence, read N- to C-terminus: MAR-binding filament-like protein 1 (697 aa).

Residues 1–41 (MATSCFPPFSASSSSLCSSQFTPLLSCPRNTQICRKKRPVM) constitute a chloroplast transit peptide. A thylakoid-targeting transit peptide spans 42–79 (ASMHSENQKESNVCNRRSILFVGFSVLPLLNLRARALE). The Lumenal, thylakoid portion of the chain corresponds to 80 to 106 (GLSTDSQAQPQKEETEQTIQGSAGNPF). The tract at residues 81-100 (LSTDSQAQPQKEETEQTIQG) is disordered. The helical transmembrane segment at 107 to 127 (VSLLNGLGVVGSGVLGSLYAL) threads the bilayer. The Stromal portion of the chain corresponds to 128–697 (ARNEKAVSDA…GEKEKVNVQQ (570 aa)). Residues 203–671 (LQNEKKLAED…KGEILRLRSQ (469 aa)) are a coiled coil. A disordered region spans residues 599 to 629 (TSRNSSLEDEREVHRQSVSEQKQISQEAQEN). Over residues 604–615 (SLEDEREVHRQS) the composition is skewed to basic and acidic residues. Positions 616–627 (VSEQKQISQEAQ) are enriched in polar residues.

Interacts with MAF1. Interacts with PTST2; the interaction is essential for the initiation of starch granules biosynthesis in leaf chloroplasts, for the correct location of the process in the stromal spaces between the thylakoid membranes, and for the association of PTST2 with the thylakoid membranes. Post-translationally, phosphorylated in vitro by human casein kinase II. In terms of processing, predicted to be translocated into the thylakoid by the Tat system.

The protein resides in the plastid. It is found in the chloroplast. It localises to the chloroplast thylakoid membrane. Its subcellular location is the chloroplast stroma. The protein localises to the chloroplast nucleoid. The protein resides in the nucleus. It is found in the nucleus matrix. Required for the initiation of starch granules biosynthesis in leaf chloroplasts. Anchored to the thylakoid membranes with its C-terminus facing into the stroma where it is essential for localizing PTST2 and SS4 to the stromal spaces between the thylakoid membranes in order to begin starch granule formation. Associated with leaf chloroplastic nucleoids in vivo. Binds to various chloroplastic double-stranded DNA fragments without particular sequence specificity in vitro. May function at the interface between nucleoids and thylakoids possibly by anchoring nucleoids to the thylakoid membrane system in mature chloroplasts. Binds nuclear DNA. Interacts with chromatin via matrix attachment regions (MARs). Likely to participate in nuclear architecture by connecting chromatin with the nuclear matrix and potentially with the nuclear envelope. The chain is MAR-binding filament-like protein 1 from Solanum lycopersicum (Tomato).